Consider the following 85-residue polypeptide: Probable Thioredoxin (85 aa).

The region spanning 2–85 (VVNIEVFTSP…LFEAINDEME (84 aa)) is the Glutaredoxin domain. A disulfide bridge links Cys13 with Cys16.

This sequence belongs to the glutaredoxin family.

The protein localises to the cytoplasm. Functionally, acts to maintain redox homeostasis; functions as a protein disulfide reductase. The chain is Probable Thioredoxin from Methanothermobacter thermautotrophicus (strain ATCC 29096 / DSM 1053 / JCM 10044 / NBRC 100330 / Delta H) (Methanobacterium thermoautotrophicum).